The following is a 702-amino-acid chain: Protein crooked neck (702 aa).

13 HAT repeats span residues 56–88, 90–122, 124–156, 158–189, 191–222, 224–259, 261–295, 305–337, 339–373, 383–419, 454–486, 488–522, and 524–555; these read DYQQ…WEEQ, QEIQ…MEMK, KQVN…MEEM, ENVA…FELR, KEID…FEES, GFIH…FEEG, KEHD…HEKK, VIVS…LIEA, GDRD…LWIN, EDAE…FEIR, REFE…LENL, GDTD…FEVA, and GETE…FEMG. The short motif at 620 to 628 is the Nuclear localization signal element; that stretch reads PRRIKKRQK. The interval 670–702 is disordered; the sequence is KDNTVDDPPATAIASEPEPAADAAPADTTDSGD. Positions 683-702 are enriched in low complexity; sequence ASEPEPAADAAPADTTDSGD.

This sequence belongs to the crooked-neck family. In terms of assembly, colocalizes with a complex containing snRNP proteins. In terms of tissue distribution, transcribed in all cells during embryonic development.

Its subcellular location is the nucleus speckle. Functionally, may be involved in pre-mRNA splicing process. Involved in embryonic neurogenesis and cell rearrangement during Malpighian tubule morphogenesis. This chain is Protein crooked neck (crn), found in Drosophila melanogaster (Fruit fly).